The sequence spans 147 residues: Large ribosomal subunit protein uL13 (147 aa).

The protein belongs to the universal ribosomal protein uL13 family. As to quaternary structure, part of the 50S ribosomal subunit.

Functionally, this protein is one of the early assembly proteins of the 50S ribosomal subunit, although it is not seen to bind rRNA by itself. It is important during the early stages of 50S assembly. This is Large ribosomal subunit protein uL13 from Polaromonas naphthalenivorans (strain CJ2).